Consider the following 556-residue polypeptide: Protein misato homolog 1 (556 aa).

At Ser41 the chain carries Phosphoserine.

It belongs to the misato family.

The protein resides in the mitochondrion outer membrane. Its subcellular location is the cytoplasm. In terms of biological role, involved in the regulation of mitochondrial distribution and morphology. Required for mitochondrial fusion and mitochondrial network formation. In Mus musculus (Mouse), this protein is Protein misato homolog 1 (Msto1).